Consider the following 348-residue polypeptide: Protein RecA (348 aa).

Gly-65 to Thr-72 serves as a coordination point for ATP.

It belongs to the RecA family.

The protein localises to the cytoplasm. Can catalyze the hydrolysis of ATP in the presence of single-stranded DNA, the ATP-dependent uptake of single-stranded DNA by duplex DNA, and the ATP-dependent hybridization of homologous single-stranded DNAs. It interacts with LexA causing its activation and leading to its autocatalytic cleavage. This Vibrio anguillarum (Listonella anguillarum) protein is Protein RecA.